A 1574-amino-acid polypeptide reads, in one-letter code: Plexin-C1 (1574 aa).

The signal sequence occupies residues 1–34; that stretch reads MEVSRRKTPPRPPYPAAPLPLIAYLLALAAPARG. Residues 35–452 form the Sema domain; it reads ADEPVWRSEQ…AGKEVRRIPV (418 aa). Topologically, residues 35–950 are extracellular; it reads ADEPVWRSEQ…YVEQESVPST (916 aa). A disulfide bridge connects residues cysteine 64 and cysteine 87. N-linked (GlcNAc...) asparagine glycosylation is found at asparagine 86, asparagine 143, and asparagine 149. Cysteines 156 and 194 form a disulfide. N-linked (GlcNAc...) asparagine glycosylation occurs at asparagine 252. A disulfide bridge connects residues cysteine 283 and cysteine 329. Asparagine 386 and asparagine 407 each carry an N-linked (GlcNAc...) asparagine glycan. Cystine bridges form between cysteine 455-cysteine 472, cysteine 461-cysteine 506, cysteine 464-cysteine 481, and cysteine 475-cysteine 487. N-linked (GlcNAc...) asparagine glycans are attached at residues asparagine 694, asparagine 773, and asparagine 802. Residues 951-971 traverse the membrane as a helical segment; sequence WYFLIALPILLAIVIVVAVVV. Topologically, residues 972–1574 are cytoplasmic; sequence TRYKSKELSR…FDEKKKCKWM (603 aa). Serine 984 is subject to Phosphoserine.

The protein belongs to the plexin family. Monomer. Homodimer. Interacts with SEMA7A. Detected on dendritic cells, skin Langerhans cells and neutrophils (at protein level).

The protein resides in the membrane. Functionally, receptor for SEMA7A, for vaccinia virus semaphorin A39R and for herpesvirus Sema protein. Binding of semaphorins triggers cellular responses leading to the rearrangement of the cytoskeleton and to secretion of IL6 and IL8. This Mus musculus (Mouse) protein is Plexin-C1 (Plxnc1).